The primary structure comprises 319 residues: Red chlorophyll catabolite reductase, chloroplastic (319 aa).

Residues 1-39 constitute a chloroplast transit peptide; it reads MAMIFCNTLYSSSSPSYLSPLTSKPSRFSKNLRPRAQFQ. Red chlorophyll catabolite contacts are provided by residues Glu154 and 207–209; that span reads YVS. Positions 255–286 form a coiled coil; that stretch reads LERCVKEEEEKIVVGEEERMELERRDKSFRRK. Position 291 (Asp291) interacts with red chlorophyll catabolite.

As to quaternary structure, homodimer. Interacts with HCAR. Interacts with SGR1, NYC1, NOL, PPH, PAO and the LHCII complex. Part of a SGR1-CCE-LHCII complex, which acts in chlorophyll breakdown. Expressed in all tissues tested, including roots.

The protein resides in the plastid. It localises to the chloroplast stroma. The protein localises to the chloroplast thylakoid membrane. It catalyses the reaction primary fluorescent chlorophyll catabolite + 2 oxidized [2Fe-2S]-[ferredoxin] = red chlorophyll catabolite + 2 reduced [2Fe-2S]-[ferredoxin] + 3 H(+). The protein operates within porphyrin-containing compound metabolism; chlorophyll degradation. Its function is as follows. Catalyzes the key reaction of chlorophyll catabolism, porphyrin macrocycle cleavage of pheophorbide a (pheide a) to a primary fluorescent catabolite (pFCC). Works in a two-step reaction with pheophorbide a oxygenase (PaO) by reducing the C20/C1 double bond of the intermediate, RCC. Belongs to the chlorophyll catabolic enzymes (CCEs). The protein is Red chlorophyll catabolite reductase, chloroplastic of Arabidopsis thaliana (Mouse-ear cress).